A 184-amino-acid polypeptide reads, in one-letter code: Photosystem I assembly protein Ycf4 (184 aa).

A run of 2 helical transmembrane segments spans residues Phe-22–Ser-42 and Ile-57–Ser-77.

Belongs to the Ycf4 family.

It localises to the plastid. It is found in the chloroplast thylakoid membrane. In terms of biological role, seems to be required for the assembly of the photosystem I complex. This is Photosystem I assembly protein Ycf4 from Arabis hirsuta (Hairy rock-cress).